An 850-amino-acid chain; its full sequence is Coiled-coil and C2 domain-containing protein 1B (850 aa).

A compositionally biased stretch (basic residues) spans 1–10 (MPGPRPRKGP). 3 disordered regions span residues 1–21 (MPGPRPRKGPKTSGQGAETAK), 54–73 (LTGETGSTSRKPAPKGRAPL), and 114–145 (GVDEETGLVDDSEETSPDLSEEKTRDNTEQPV). Residues 114 to 129 (GVDEETGLVDDSEETS) show a composition bias toward acidic residues. Positions 167 to 213 (LQALLEERIQNYREAAASAKEAGEAAKARRCERGLKTLESQLATVRK) form a coiled coil. Disordered stretches follow at residues 215-277 (GKIC…SDPD) and 436-525 (FAEL…SPSV). Residues 234–244 (AHQERPSKDSE) show a composition bias toward basic and acidic residues. The span at 440-450 (PVPPGFPPIPG) shows a compositional bias: pro residues. Composition is skewed to low complexity over residues 489–502 (PAQAPLAKKPAQPL) and 511–524 (EPKASSSKESLSPS). The residue at position 585 (S585) is a Phosphoserine. The residue at position 588 (T588) is a Phosphothreonine. Positions 668 to 807 (DPPSHHFELK…EKECEIREIM (140 aa)) constitute a C2 domain.

Interacts with CHMP4B. In terms of tissue distribution, expressed in epididymal sperm but not in testicular sperm (at protein level).

The protein resides in the nucleus. Its function is as follows. Transcription factor that binds specifically to the DRE (dual repressor element) and represses HTR1A gene transcription in neuronal cells. This is Coiled-coil and C2 domain-containing protein 1B (Cc2d1b) from Rattus norvegicus (Rat).